We begin with the raw amino-acid sequence, 224 residues long: Transcriptional regulatory protein TctD (224 aa).

The Response regulatory domain maps to 2-116 (RLLLAEDNRE…ELDARLRALL (115 aa)). At D51 the chain carries 4-aspartylphosphate. The segment at residues 121–219 (GQVHEVQQLG…LRGLGYVLER (99 aa)) is a DNA-binding region (ompR/PhoB-type).

Its function is as follows. Transcriptional activator of the tctI tricarboxylate transport system operon. The protein is Transcriptional regulatory protein TctD (tctD) of Salmonella typhimurium (strain SL1344).